A 637-amino-acid chain; its full sequence is Extracellular metalloproteinase 2 (637 aa).

The N-terminal stretch at 1-20 (MRSFLLASLASVATLKSAQA) is a signal peptide. Residues 21 to 244 (HPAHSTRGLS…VHAVVDYSAD (224 aa)) constitute a propeptide that is removed on maturation. 4 N-linked (GlcNAc...) asparagine glycosylation sites follow: N302, N328, N337, and N413. Position 430 (H430) interacts with Zn(2+). The active site involves E431. H434 serves as a coordination point for Zn(2+).

The protein belongs to the peptidase M36 family. It depends on Zn(2+) as a cofactor.

Its subcellular location is the secreted. Secreted metalloproteinase that allows assimilation of proteinaceous substrates. This Phaeosphaeria nodorum (strain SN15 / ATCC MYA-4574 / FGSC 10173) (Glume blotch fungus) protein is Extracellular metalloproteinase 2 (MEP2).